Reading from the N-terminus, the 770-residue chain is Kinesin-like protein klpA (770 aa).

The disordered stretch occupies residues 1 to 152 (MENVQSRMQG…GLGKRGEWDQ (152 aa)). The span at 85 to 105 (SSTLTRSASAASRPRGPLSSS) shows a compositional bias: low complexity. Positions 106–119 (TSGRPKTSMSTSRR) are enriched in polar residues. The span at 134-152 (THQEERSYGGLGKRGEWDQ) shows a compositional bias: basic and acidic residues. The stretch at 175-425 (QESSGLKDAL…QELKGNIRVF (251 aa)) forms a coiled coil. Positions 421–756 (NIRVFCRVRP…LKFATKVHNT (336 aa)) constitute a Kinesin motor domain. 514–521 (GQTGSGKT) is an ATP binding site.

This sequence belongs to the TRAFAC class myosin-kinesin ATPase superfamily. Kinesin family. NCD subfamily.

Its subcellular location is the cytoplasm. The protein resides in the cytoskeleton. The chain is Kinesin-like protein klpA (klpA) from Emericella nidulans (strain FGSC A4 / ATCC 38163 / CBS 112.46 / NRRL 194 / M139) (Aspergillus nidulans).